A 517-amino-acid chain; its full sequence is Beta-galactoside alpha-2,6-sialyltransferase 2 (517 aa).

The Cytoplasmic portion of the chain corresponds to 1-10 (MKPNLKQWKQ). The chain crosses the membrane as a helical; Signal-anchor for type II membrane protein span at residues 11 to 31 (FMLFGICAWGLLFLVIFVYFT). Residues 32–517 (DSNSVEPVPS…IHCPIKDHIT (486 aa)) lie on the Lumenal side of the membrane. 3 N-linked (GlcNAc...) asparagine glycosylation sites follow: Asn-201, Asn-298, and Asn-328. Disulfide bonds link Cys-244/Cys-510, Cys-287/Cys-439, and Cys-457/Cys-468.

The protein belongs to the glycosyltransferase 29 family.

It is found in the golgi apparatus. The protein localises to the golgi stack membrane. The catalysed reaction is a beta-D-galactoside + CMP-N-acetyl-beta-neuraminate = an N-acetyl-alpha-neuraminyl-(2-&gt;6)-beta-D-galactosyl derivative + CMP + H(+). Its function is as follows. Transfers sialic acid from the donor of substrate CMP-sialic acid to galactose containing acceptor substrates. The sequence is that of Beta-galactoside alpha-2,6-sialyltransferase 2 (st6gal2) from Xenopus tropicalis (Western clawed frog).